The sequence spans 179 residues: uncharacterized protein (179 aa).

2 disordered regions span residues 26–103 (LSAV…SYED) and 136–179 (KHKA…SWFN). The span at 34–61 (QQGKNEEQRQHDEWVAERNREIQQEKQR) shows a compositional bias: basic and acidic residues. The span at 63–79 (ANAQAAANKRAATAAAN) shows a compositional bias: low complexity. Basic and acidic residues-rich tracts occupy residues 82-103 (ARQDKLDAEASADKKRDQSYED) and 158-179 (GGRDLMKSVGKAEENKSDSWFN).

This is an uncharacterized protein from Escherichia coli (strain K12).